Reading from the N-terminus, the 52-residue chain is UPF0057 membrane protein At1g57550 (52 aa).

2 consecutive transmembrane segments (helical) span residues 4 to 24 (FLEV…RYGL) and 30 to 50 (VCLL…IYVL).

The protein belongs to the UPF0057 (PMP3) family.

Its subcellular location is the membrane. The polypeptide is UPF0057 membrane protein At1g57550 (Arabidopsis thaliana (Mouse-ear cress)).